Consider the following 248-residue polypeptide: Superoxide dismutase [Mn] 1 (248 aa).

Positions 1 to 41 are cleaved as a signal peptide; sequence MQTTFRRILILFVGLLVPLFFACQSNSQVDAAPSAAPQLSA. 4 residues coordinate Mn(2+): H68, H123, D208, and H212.

It belongs to the iron/manganese superoxide dismutase family. As to quaternary structure, homodimer. The cofactor is Mn(2+).

The enzyme catalyses 2 superoxide + 2 H(+) = H2O2 + O2. Functionally, destroys superoxide anion radicals which are normally produced within the cells and which are toxic to biological systems. The polypeptide is Superoxide dismutase [Mn] 1 (sodA1) (Leptolyngbya boryana (Plectonema boryanum)).